A 467-amino-acid polypeptide reads, in one-letter code: UDP-N-acetylmuramoylalanine--D-glutamate ligase (467 aa).

115-121 (GTDGKTT) contacts ATP.

It belongs to the MurCDEF family.

It is found in the cytoplasm. It catalyses the reaction UDP-N-acetyl-alpha-D-muramoyl-L-alanine + D-glutamate + ATP = UDP-N-acetyl-alpha-D-muramoyl-L-alanyl-D-glutamate + ADP + phosphate + H(+). It functions in the pathway cell wall biogenesis; peptidoglycan biosynthesis. Cell wall formation. Catalyzes the addition of glutamate to the nucleotide precursor UDP-N-acetylmuramoyl-L-alanine (UMA). The protein is UDP-N-acetylmuramoylalanine--D-glutamate ligase of Chlorobaculum parvum (strain DSM 263 / NCIMB 8327) (Chlorobium vibrioforme subsp. thiosulfatophilum).